Here is a 678-residue protein sequence, read N- to C-terminus: DNA mismatch repair protein MutL (678 aa).

The protein belongs to the DNA mismatch repair MutL/HexB family.

In terms of biological role, this protein is involved in the repair of mismatches in DNA. It is required for dam-dependent methyl-directed DNA mismatch repair. May act as a 'molecular matchmaker', a protein that promotes the formation of a stable complex between two or more DNA-binding proteins in an ATP-dependent manner without itself being part of a final effector complex. The protein is DNA mismatch repair protein MutL of Lactiplantibacillus plantarum (strain ATCC BAA-793 / NCIMB 8826 / WCFS1) (Lactobacillus plantarum).